Here is a 374-residue protein sequence, read N- to C-terminus: Low-specificity L-threonine aldolase (374 aa).

At lysine 213 the chain carries N6-(pyridoxal phosphate)lysine. The interval 354 to 374 (HPHKDDGRNNKKMYSLDAIKK) is disordered.

It belongs to the threonine aldolase family. Homotetramer. The cofactor is pyridoxal 5'-phosphate.

It catalyses the reaction L-threonine = acetaldehyde + glycine. The catalysed reaction is L-allo-threonine = acetaldehyde + glycine. It functions in the pathway amino-acid degradation; L-threonine degradation via aldolase pathway; acetaldehyde and glycine from L-threonine: step 1/1. The chain is Low-specificity L-threonine aldolase (GLY1) from Candida albicans (Yeast).